The primary structure comprises 219 residues: Orotate phosphoribosyltransferase (219 aa).

5-phospho-alpha-D-ribose 1-diphosphate is bound at residue lysine 26. Position 34-35 (34-35 (FF)) interacts with orotate. 5-phospho-alpha-D-ribose 1-diphosphate contacts are provided by residues 72-73 (YK), arginine 102, lysine 103, lysine 106, histidine 108, and 128-136 (DDVITAGTA). Threonine 132 and arginine 160 together coordinate orotate.

This sequence belongs to the purine/pyrimidine phosphoribosyltransferase family. PyrE subfamily. As to quaternary structure, homodimer.

It carries out the reaction orotidine 5'-phosphate + diphosphate = orotate + 5-phospho-alpha-D-ribose 1-diphosphate. It functions in the pathway pyrimidine metabolism; UMP biosynthesis via de novo pathway; UMP from orotate: step 1/2. Its function is as follows. Catalyzes the transfer of a ribosyl phosphate group from 5-phosphoribose 1-diphosphate to orotate, leading to the formation of orotidine monophosphate (OMP). The chain is Orotate phosphoribosyltransferase (URA5) from Yarrowia lipolytica (strain CLIB 122 / E 150) (Yeast).